The primary structure comprises 690 residues: Glutamate--cysteine ligase (690 aa).

Composition is skewed to low complexity over residues Q574–N585 and N598–T619. The tract at residues Q574 to M620 is disordered.

Belongs to the glutamate--cysteine ligase type 3 family.

The enzyme catalyses L-cysteine + L-glutamate + ATP = gamma-L-glutamyl-L-cysteine + ADP + phosphate + H(+). It participates in sulfur metabolism; glutathione biosynthesis; glutathione from L-cysteine and L-glutamate: step 1/2. In Candida albicans (Yeast), this protein is Glutamate--cysteine ligase (GCS1).